The chain runs to 268 residues: GTP cyclohydrolase FolE2 (268 aa).

The protein belongs to the GTP cyclohydrolase IV family.

The catalysed reaction is GTP + H2O = 7,8-dihydroneopterin 3'-triphosphate + formate + H(+). The protein operates within cofactor biosynthesis; 7,8-dihydroneopterin triphosphate biosynthesis; 7,8-dihydroneopterin triphosphate from GTP: step 1/1. In terms of biological role, converts GTP to 7,8-dihydroneopterin triphosphate. The protein is GTP cyclohydrolase FolE2 of Methylococcus capsulatus (strain ATCC 33009 / NCIMB 11132 / Bath).